A 1078-amino-acid chain; its full sequence is MFGAASRMDTTAVCTGGVTESRGIVDSLQKFSSLPAYLPTNLHISNAEESFFLKEANQDLTRNSSLQARVEPFFIYRARTPPIINASYGPFSVEKIIPQELLLTSTAFGNMDKFPFNWKLKSHILDSSIYSNRPKVQTLFYVTGMGWDDSDLTEDLPCVKMFAFPEAREVAASCRLQGAPGLCVAELELLPEWFSSGLDLEPEEEIPALLGGTTMELFFTLYPADKAGQCPLEEEGKWENNIHSGLESPQQAFPARERIGSVVVYPTQDDLKWSLVSLDENVVISVPLNLVREGDTATFLVSLTSSSVADQFTLRIKAAAGVKITAVRVSSEDQWAVQEEIDNGSTQTSATLTCMGHRPDTQSRVNGSFYEILQVDFGIDNSSDLAGAQQITWQVEYPIEDSMSELVVSEIFVSQTTFVGIVPLAMDTEVLNTAILTGKPVSVPVKVVGVQEDGSVVDVSESVECKSADEDVIKVSNNCDSIFVNGKEMKSKVDTIVNFTHQHFTSQFEVTVWAPRLPLQIEISDTELSQIKGWRIPVAANRRPTRESDDEDDEEKKGRGCSLQYQHATVRVLTQFVAESPDLGQLTYMLGPDWQFDITDLVTEFMKVEEPKIAQLQDGRTLAGREPGITTVQVLSPLSDSILAEKTVIVLDDRVTIAELGVQLVAGMSLSLQPHRADKRAIVSTAAALDVLQSPQQEAIVSSWILFSDGSVTPLDIYDPKDYSVTVSSLDEMVVSVQANLESKWPIVVAEGEGQGPLIKLEMMISEPCQKTKRKSVLAVGKGNVKVKFEPSSDEHQGGSNDIEGINREYKDHLSNSIEREGNQERAVQEWFHRGTPVGQEESTNKSTTPQSPMEGKNKLLKSGGPDAFTSFPTQGKSPDPNNPSDLTVTSRGLTDLEIGMYALLCVFCLAILVFLINCVAFAWKYRHKRFAVSEQGNIPHSHDWVWLGNEVELLENPVDITLPSEECTTMIDRGLQFEERNFLLNGSSQKTFHSQLLRPSDYVYEKEIKNEPMNSSGPKRKRVKFTSYTTILPEDGGPYTNSILFDSDDNIKWVCQDMGLGDSQDFRDYMESLQDQM.

Residues 1 to 903 (MFGAASRMDT…LTDLEIGMYA (903 aa)) are Extracellular-facing. N-linked (GlcNAc...) asparagine glycans are attached at residues N343, N366, and N381. The tract at residues 834-887 (RGTPVGQEESTNKSTTPQSPMEGKNKLLKSGGPDAFTSFPTQGKSPDPNNPSDL) is disordered. Polar residues predominate over residues 841-852 (EESTNKSTTPQS). Residues 904–924 (LLCVFCLAILVFLINCVAFAW) traverse the membrane as a helical segment. Over 925–1078 (KYRHKRFAVS…DYMESLQDQM (154 aa)) the chain is Cytoplasmic.

The protein belongs to the TMEM132 family.

Its subcellular location is the membrane. This is Transmembrane protein 132B (TMEM132B) from Homo sapiens (Human).